A 430-amino-acid polypeptide reads, in one-letter code: CinA-like protein (430 aa).

It belongs to the CinA family.

In Prochlorococcus marinus (strain NATL2A), this protein is CinA-like protein.